The sequence spans 236 residues: CHD1 helical C-terminal domain containing protein 1 (236 aa).

A CHD1 helical C-terminal domain (CHCT) region spans residues 44 to 145 (LDQDTFKTCK…SSQPAKFLVT (102 aa)). The disordered stretch occupies residues 184–236 (LSNMQTPGQGSPLPGQPRSQDHVKKDSLRELSQKPKLKRKRIKEAPETPETEP). The segment covering 202–216 (SQDHVKKDSLRELSQ) has biased composition (basic and acidic residues).

Its subcellular location is the cytoplasm. It localises to the nucleus. May play a role in regulation of apoptosis. The chain is CHD1 helical C-terminal domain containing protein 1 from Homo sapiens (Human).